Reading from the N-terminus, the 392-residue chain is Ribosomal RNA large subunit methyltransferase G (392 aa).

Belongs to the methyltransferase superfamily. RlmG family.

It is found in the cytoplasm. The catalysed reaction is guanosine(1835) in 23S rRNA + S-adenosyl-L-methionine = N(2)-methylguanosine(1835) in 23S rRNA + S-adenosyl-L-homocysteine + H(+). Its function is as follows. Specifically methylates the guanine in position 1835 (m2G1835) of 23S rRNA. The protein is Ribosomal RNA large subunit methyltransferase G of Colwellia psychrerythraea (strain 34H / ATCC BAA-681) (Vibrio psychroerythus).